The sequence spans 147 residues: AP-2 complex subunit sigma (147 aa).

It belongs to the adaptor complexes small subunit family. As to quaternary structure, adaptor protein complex 2 (AP-2) is a heterotetramer composed of two large adaptins (alpha-type subunit APL3 and beta-type subunit APL1), a medium chain (mu-type subunit APM4) and a small adaptin (sigma-type subunit APS2). Interacts with APL1.

The protein localises to the cell membrane. Its subcellular location is the membrane. The protein resides in the coated pit. Functionally, component of the adaptor complexes which link clathrin to receptors in coated vesicles. Clathrin-associated protein complexes are believed to interact with the cytoplasmic tails of membrane proteins, leading to their selection and concentration. In Saccharomyces cerevisiae (strain ATCC 204508 / S288c) (Baker's yeast), this protein is AP-2 complex subunit sigma (APS2).